The primary structure comprises 225 residues: PKHD-type hydroxylase YbiX (225 aa).

Residues 78-177 (TLSTPLFNRY…RVASFMWIQS (100 aa)) form the Fe2OG dioxygenase domain. The Fe cation site is built by His-96, Asp-98, and His-158. Residue Arg-168 participates in 2-oxoglutarate binding.

The cofactor is Fe(2+). It depends on L-ascorbate as a cofactor.

In Escherichia coli O81 (strain ED1a), this protein is PKHD-type hydroxylase YbiX.